Reading from the N-terminus, the 431-residue chain is Glucose-1-phosphate adenylyltransferase (431 aa).

Lys39 is a binding site for beta-D-fructose 1,6-bisphosphate. AMP is bound by residues Arg40, His46, and Arg52. Tyr114 lines the alpha-D-glucose 1-phosphate pocket. Arg130 contacts AMP. Residues Gly179, 194 to 195 (EK), and Ser212 each bind alpha-D-glucose 1-phosphate. Glu370 and Arg386 together coordinate AMP. Residues 419–423 (REMLR) and 429–431 (QER) contribute to the beta-D-fructose 1,6-bisphosphate site.

The protein belongs to the bacterial/plant glucose-1-phosphate adenylyltransferase family. As to quaternary structure, homotetramer.

The enzyme catalyses alpha-D-glucose 1-phosphate + ATP + H(+) = ADP-alpha-D-glucose + diphosphate. The protein operates within glycan biosynthesis; glycogen biosynthesis. Its activity is regulated as follows. Allosterically activated by fructose-1,6-bisphosphate (F16BP) and inhibited by AMP. Functionally, involved in the biosynthesis of ADP-glucose, a building block required for the elongation reactions to produce glycogen. Catalyzes the reaction between ATP and alpha-D-glucose 1-phosphate (G1P) to produce pyrophosphate and ADP-Glc. In Shigella boydii serotype 18 (strain CDC 3083-94 / BS512), this protein is Glucose-1-phosphate adenylyltransferase.